The chain runs to 160 residues: uncharacterized protein (160 aa).

An N-terminal signal peptide occupies residues M1–Q18.

This is an uncharacterized protein from Caenorhabditis elegans.